We begin with the raw amino-acid sequence, 119 residues long: Beta-2-microglobulin (119 aa).

An N-terminal signal peptide occupies residues 1–20 (MFRSVALAVLALLFLSGLEA). Residues 25-114 (PKIQVYSRHP…VTLSGPRTVK (90 aa)) enclose the Ig-like C1-type domain. Residues C45 and C100 are joined by a disulfide bond.

The protein belongs to the beta-2-microglobulin family. As to quaternary structure, heterodimer of an alpha chain and a beta chain. Beta-2-microglobulin is the beta-chain of major histocompatibility complex class I molecules.

It is found in the secreted. Component of the class I major histocompatibility complex (MHC). Involved in the presentation of peptide antigens to the immune system. The sequence is that of Beta-2-microglobulin (B2M) from Chlorocebus aethiops (Green monkey).